The chain runs to 271 residues: 5'-AMP-activated protein kinase subunit beta-2 (271 aa).

The interval 1–47 (MGNTTSERVSGERHGAKAARAEGGGHGPGKEHKIMVGSTDDPSVFSL) is disordered. S38 is subject to Phosphoserine; by ULK1. Position 39 is a phosphothreonine; by ULK1 (T39). S68 is modified (phosphoserine; by ULK1). Phosphoserine occurs at positions 94 and 107. Residue T147 is modified to Phosphothreonine. 2 positions are modified to phosphoserine: S157 and S169. The residue at position 173 (S173) is a Phosphoserine; by ULK1. Residue S183 is modified to Phosphoserine.

This sequence belongs to the 5'-AMP-activated protein kinase beta subunit family. In terms of assembly, AMPK is a heterotrimer of an alpha catalytic subunit (PRKAA1 or PRKAA2), a beta (PRKAB1 or PRKAB2) and a gamma non-catalytic subunits (PRKAG1, PRKAG2 or PRKAG3). Post-translationally, phosphorylated when associated with the catalytic subunit (PRKAA1 or PRKAA2). Phosphorylated by ULK1 and ULK2; leading to negatively regulate AMPK activity and suggesting the existence of a regulatory feedback loop between ULK1, ULK2 and AMPK.

Functionally, non-catalytic subunit of AMP-activated protein kinase (AMPK), an energy sensor protein kinase that plays a key role in regulating cellular energy metabolism. In response to reduction of intracellular ATP levels, AMPK activates energy-producing pathways and inhibits energy-consuming processes: inhibits protein, carbohydrate and lipid biosynthesis, as well as cell growth and proliferation. AMPK acts via direct phosphorylation of metabolic enzymes, and by longer-term effects via phosphorylation of transcription regulators. Also acts as a regulator of cellular polarity by remodeling the actin cytoskeleton; probably by indirectly activating myosin. Beta non-catalytic subunit acts as a scaffold on which the AMPK complex assembles, via its C-terminus that bridges alpha (PRKAA1 or PRKAA2) and gamma subunits (PRKAG1, PRKAG2 or PRKAG3). This Rattus norvegicus (Rat) protein is 5'-AMP-activated protein kinase subunit beta-2 (Prkab2).